The chain runs to 537 residues: Mitochondria-eating protein (537 aa).

The interaction with YWHAG/14-3-3 protein gamma stretch occupies residues 1 to 270 (MAESLKKLAK…SHSRSRSHSR (270 aa)). 6 positions are modified to phosphoserine: Ser13, Ser85, Ser123, Ser127, Ser154, and Ser157. The tract at residues 109–150 (SKNRDNSPDQDQHQSDNESFSETQPTQVQDDLAESGKSLEGA) is disordered. The segment covering 110–124 (KNRDNSPDQDQHQSD) has biased composition (basic and acidic residues). Residues 125-137 (NESFSETQPTQVQ) are compositionally biased toward polar residues. Coiled coils occupy residues 152-184 (NGST…ARHK) and 210-243 (QDVV…RSAR). Disordered regions lie at residues 171 to 212 (QLKS…PQDV) and 233 to 291 (EKSG…RAKM). Residues 179–209 (EDARHKTSENRRSEALKSDHRSTKRTQDQRP) are compositionally biased toward basic and acidic residues. Positions 239–251 (GRSARSPSPSTGT) are enriched in low complexity. The span at 252 to 269 (RSHRRGRSRSHSRSRSHS) shows a compositional bias: basic residues. Phosphoserine is present on residues Ser283, Ser285, and Ser508.

This sequence belongs to the MIEAP family. As to quaternary structure, interacts (via coiled-coil domains) with BNIP3L (via BH3 domain). Interacts (via coiled-coil domains) with BNIP3 (via BH3 domain). Interacts with YWHAG/14-3-3 protein gamma; a protein that also plays a role in MALM. In terms of tissue distribution, in testis, expressed primarily in spermatids.

The protein resides in the cytoplasm. The protein localises to the cytosol. It is found in the mitochondrion outer membrane. It localises to the mitochondrion matrix. Its function is as follows. Key regulator of mitochondrial quality that mediates the repairing or degradation of unhealthy mitochondria in response to mitochondrial damage. Mediator of mitochondrial protein catabolic process (also named MALM) by mediating the degradation of damaged proteins inside mitochondria by promoting the accumulation in the mitochondrial matrix of hydrolases that are characteristic of the lysosomal lumen. Also involved in mitochondrion degradation of damaged mitochondria by promoting the formation of vacuole-like structures (named MIV), which engulf and degrade unhealthy mitochondria by accumulating lysosomes. The physical interaction of SPATA18/MIEAP, BNIP3 and BNIP3L/NIX at the mitochondrial outer membrane regulates the opening of a pore in the mitochondrial double membrane in order to mediate the translocation of lysosomal proteins from the cytoplasm to the mitochondrial matrix. Binds cardiolipin. May form molecular condensates (non-membrane-bounded organelles) within mitochondria that compartmentalize and promote cardiolipin metabolism. The chain is Mitochondria-eating protein (Spata18) from Mus musculus (Mouse).